Here is a 243-residue protein sequence, read N- to C-terminus: Probable transcriptional regulatory protein Patl_0550 (243 aa).

Belongs to the TACO1 family.

It localises to the cytoplasm. The polypeptide is Probable transcriptional regulatory protein Patl_0550 (Pseudoalteromonas atlantica (strain T6c / ATCC BAA-1087)).